A 266-amino-acid chain; its full sequence is Tryptophan synthase alpha chain (266 aa).

Residues E46 and D57 each act as proton acceptor in the active site.

This sequence belongs to the TrpA family. As to quaternary structure, tetramer of two alpha and two beta chains.

It catalyses the reaction (1S,2R)-1-C-(indol-3-yl)glycerol 3-phosphate + L-serine = D-glyceraldehyde 3-phosphate + L-tryptophan + H2O. It functions in the pathway amino-acid biosynthesis; L-tryptophan biosynthesis; L-tryptophan from chorismate: step 5/5. Functionally, the alpha subunit is responsible for the aldol cleavage of indoleglycerol phosphate to indole and glyceraldehyde 3-phosphate. The protein is Tryptophan synthase alpha chain of Lacticaseibacillus casei (Lactobacillus casei).